Here is an 873-residue protein sequence, read N- to C-terminus: Ectonucleotide pyrophosphatase/phosphodiesterase family member 3 (873 aa).

Topologically, residues 1–11 (MESMLTLAMEQ) are cytoplasmic. A helical; Signal-anchor for type II membrane protein transmembrane segment spans residues 12 to 30 (PVKRNTLKKYKIACIVLLA). The Extracellular portion of the chain corresponds to 31 to 873 (LLVIVSLGLG…TYLPTFETTI (843 aa)). SMB domains are found at residues 51-93 (QGSC…VEST) and 94-138 (RIWM…GETS). Disulfide bonds link cysteine 54/cysteine 71, cysteine 58/cysteine 89, cysteine 69/cysteine 82, cysteine 75/cysteine 81, cysteine 98/cysteine 115, cysteine 103/cysteine 133, cysteine 113/cysteine 126, cysteine 119/cysteine 125, cysteine 144/cysteine 190, and cysteine 152/cysteine 364. Positions 78–80 (RGD) match the Cell attachment site motif. Residues 160–544 (PVILFSMDGF…HGSLNHLLKV (385 aa)) form a phosphodiesterase region. Residue aspartate 167 coordinates Zn(2+). Lysine 204 is an ATP binding site. Threonine 205 provides a ligand contact to Zn(2+). The Nucleophile role is filled by threonine 205. Asparagine 226 is a binding site for ATP. Asparagine 236 is a glycosylation site (N-linked (GlcNAc...) asparagine). Position 275 (glutamate 275) interacts with ATP. Residue asparagine 279 is glycosylated (N-linked (GlcNAc...) asparagine). Tyrosine 289 contributes to the ATP binding site. A glycan (N-linked (GlcNAc...) asparagine) is linked at asparagine 290. Positions 325, 329, 372, and 373 each coordinate Zn(2+). 6 disulfides stabilise this stretch: cysteine 380–cysteine 477, cysteine 428–cysteine 816, cysteine 561–cysteine 621, cysteine 573–cysteine 677, cysteine 575–cysteine 662, and cysteine 785–cysteine 795. Asparagine 425 carries an N-linked (GlcNAc...) asparagine glycan. Histidine 482 contributes to the Zn(2+) binding site. N-linked (GlcNAc...) asparagine glycosylation is found at asparagine 532, asparagine 592, asparagine 685, and asparagine 697. A nuclease region spans residues 580–873 (NSIQLEQVNQ…TYLPTFETTI (294 aa)). Ca(2+) is bound by residues aspartate 750, asparagine 752, aspartate 754, histidine 756, and aspartate 758. Asparagine 787 is a glycosylation site (N-linked (GlcNAc...) asparagine).

In terms of assembly, monomer and homodimer. It depends on Zn(2+) as a cofactor. Post-translationally, N-glycosylated. N-glycosylation is necessary for normal transport to the cell membrane, but is not the apical targeting signal.

The protein localises to the cell membrane. It is found in the apical cell membrane. The protein resides in the secreted. The catalysed reaction is a ribonucleoside 5'-triphosphate + H2O = a ribonucleoside 5'-phosphate + diphosphate + H(+). It carries out the reaction ATP + H2O = AMP + diphosphate + H(+). The enzyme catalyses CTP + H2O = CMP + diphosphate + H(+). It catalyses the reaction GTP + H2O = GMP + diphosphate + H(+). The catalysed reaction is UTP + H2O = UMP + diphosphate + H(+). It carries out the reaction UDP-N-acetyl-alpha-D-glucosamine + H2O = N-acetyl-alpha-D-glucosamine 1-phosphate + UMP + 2 H(+). The enzyme catalyses P(1),P(3)-bis(5'-adenosyl) triphosphate + H2O = AMP + ADP + 2 H(+). It catalyses the reaction P(1),P(4)-bis(5'-adenosyl) tetraphosphate + H2O = AMP + ATP + 2 H(+). The catalysed reaction is P(1),P(5)-bis(5'-adenosyl) pentaphosphate + H2O = adenosine 5'-tetraphosphate + AMP + 2 H(+). It carries out the reaction P(1),P(4)-bis(5'-guanosyl) tetraphosphate + H2O = GMP + GTP + 2 H(+). The enzyme catalyses Hydrolytically removes 5'-nucleotides successively from the 3'-hydroxy termini of 3'-hydroxy-terminated oligonucleotides.. Functionally, hydrolase that metabolizes extracellular nucleotides, including ATP, GTP, UTP and CTP. Limits mast cells and basophils response during inflammation and during the chronic phases of allergic responses by eliminating extracellular ATP, a signaling molecule activating these cells in an autocrine manner. Metabolizes extracellular ATP in the lumen of the small intestine, and thereby prevents ATP-induced apoptosis of intestinal plasmacytoid dendritic cells. Has a broad specificity and can also hydrolyze UDP-GlcNAc into UMP and GlcNAc-1-phosphate and potentially several other intracellular nucleotide sugars, including UDP-GalNAc, CMP-NeuAc, GDP-Fuc, and UDP-GlcA. Thereby, could modulate glycan biosynthesis and protein glycosylation. Can hydrolyze extracellular dinucleoside polyphosphates, including the vasoactive adenosine polyphosphates as well. In addition, displays an alkaline phosphodiesterase activity in vitro. This chain is Ectonucleotide pyrophosphatase/phosphodiesterase family member 3, found in Pongo abelii (Sumatran orangutan).